A 535-amino-acid chain; its full sequence is Ribonuclease Y (535 aa).

The chain crosses the membrane as a helical span at residues 4 to 24 (IILLIVSALIGLILGYALISI). The disordered stretch occupies residues 118 to 141 (ENLSSKEKVLDSKEQSLTDKSKHI). Residues 225–285 (TITSVHLPDD…IRREIARMTL (61 aa)) form the KH domain. An HD domain is found at 351–444 (VLRHSVEVGK…VAAADALSSA (94 aa)).

It belongs to the RNase Y family.

The protein localises to the cell membrane. In terms of biological role, endoribonuclease that initiates mRNA decay. This Streptococcus pyogenes serotype M18 (strain MGAS8232) protein is Ribonuclease Y.